The sequence spans 357 residues: DnaJ homolog subfamily C member 25 (357 aa).

A helical transmembrane segment spans residues 19-39; that stretch reads WLLLAPLLLVPLLVRPAEALV. Positions 48 to 121 constitute a J domain; that stretch reads DCYEVLGVSR…ETRKDYDYML (74 aa). 2 helical membrane passes run 147–167 and 241–261; these read VVIL…WWNS and LLLF…AWYC.

It belongs to the DNAJC25 family.

The protein resides in the membrane. The protein is DnaJ homolog subfamily C member 25 (Dnajc25) of Rattus norvegicus (Rat).